The following is a 470-amino-acid chain: MPCQAPHSDSNVKNPSEATNQKDHSPRVGFVSLGCPKALVDSEQIITQLRAEGYAISGTYDGADLVVVNTCGFIDEAVQESLDAIGEALTENGKVIVTGCLGAKKDAAGHDIVSSVHPKVLAVTGPHALGEVMQAVHTHLPKPHDPFTDLVPAAGIKLTPKHYAYLKISEGCNHRCSFCIIPSMRGDLVSRPVAEVMLEAENLFKAGVKELLVISQDTSAYGVDVKYRTGFWNGRPLKTRMTELVAALGELAAQYGAWVRLHYVYPYPHVDEIIPLMNNGHVLPYLDVPLQHAHPDVLKRMKRPANAEKTMDRIRAWREICPELTIRSTFIAGFPGETEAEFQTLLDFIAEAELDRVGCFAYSPVEGATANDLPGALPDEVREERRARFMEVAEAVSARRLQRKVGQTLRVLVDEVNQDGGIGRSSADAPEIDGLVYIAPPQRTSQRYRAGEFVDVRITGADGHDLWGEV.

The segment at 1–27 (MPCQAPHSDSNVKNPSEATNQKDHSPR) is disordered. Positions 7–19 (HSDSNVKNPSEAT) are enriched in polar residues. The MTTase N-terminal domain occupies 26-141 (PRVGFVSLGC…VMQAVHTHLP (116 aa)). [4Fe-4S] cluster is bound by residues Cys35, Cys71, Cys100, Cys172, Cys176, and Cys179. The Radical SAM core domain occupies 158–399 (LTPKHYAYLK…MEVAEAVSAR (242 aa)). Residues 402–470 (QRKVGQTLRV…ADGHDLWGEV (69 aa)) form the TRAM domain.

This sequence belongs to the methylthiotransferase family. RimO subfamily. The cofactor is [4Fe-4S] cluster.

It is found in the cytoplasm. It carries out the reaction L-aspartate(89)-[ribosomal protein uS12]-hydrogen + (sulfur carrier)-SH + AH2 + 2 S-adenosyl-L-methionine = 3-methylsulfanyl-L-aspartate(89)-[ribosomal protein uS12]-hydrogen + (sulfur carrier)-H + 5'-deoxyadenosine + L-methionine + A + S-adenosyl-L-homocysteine + 2 H(+). Functionally, catalyzes the methylthiolation of an aspartic acid residue of ribosomal protein uS12. The chain is Ribosomal protein uS12 methylthiotransferase RimO from Cupriavidus taiwanensis (strain DSM 17343 / BCRC 17206 / CCUG 44338 / CIP 107171 / LMG 19424 / R1) (Ralstonia taiwanensis (strain LMG 19424)).